The primary structure comprises 622 residues: Phosphomethylpyrimidine synthase (622 aa).

Positions 109 to 130 (EPISNNNNDRQSSDKQLSFTTN) are disordered. Residues Asn-234, Met-263, Tyr-292, His-328, 348–350 (SRG), 389–392 (DGLR), and Glu-428 each bind substrate. His-432 serves as a coordination point for Zn(2+). Tyr-455 provides a ligand contact to substrate. His-496 lines the Zn(2+) pocket. [4Fe-4S] cluster-binding residues include Cys-576, Cys-579, and Cys-584.

This sequence belongs to the ThiC family. As to quaternary structure, homodimer. The cofactor is [4Fe-4S] cluster.

It carries out the reaction 5-amino-1-(5-phospho-beta-D-ribosyl)imidazole + S-adenosyl-L-methionine = 4-amino-2-methyl-5-(phosphooxymethyl)pyrimidine + CO + 5'-deoxyadenosine + formate + L-methionine + 3 H(+). It functions in the pathway cofactor biosynthesis; thiamine diphosphate biosynthesis. Catalyzes the synthesis of the hydroxymethylpyrimidine phosphate (HMP-P) moiety of thiamine from aminoimidazole ribotide (AIR) in a radical S-adenosyl-L-methionine (SAM)-dependent reaction. The polypeptide is Phosphomethylpyrimidine synthase (Baumannia cicadellinicola subsp. Homalodisca coagulata).